The chain runs to 981 residues: Serine/threonine-protein kinase D1044.8 (981 aa).

One can recognise a Protein kinase domain in the interval 453–725 (YELLDQLGAG…MCGVRLLEYL (273 aa)). Residues 459-467 (LGAGAFGCV) and lysine 488 each bind ATP. Aspartate 591 (proton acceptor) is an active-site residue. Positions 735 to 746 (TSDMTASQSSYN) are enriched in polar residues. Disordered stretches follow at residues 735–802 (TSDM…PSSI) and 823–847 (IPSR…TELK). Residues 752 to 762 (SPSSLNSSTSS) show a composition bias toward low complexity. Over residues 830–847 (QTCSTEHPARSSSSTELK) the composition is skewed to polar residues.

Belongs to the protein kinase superfamily. NEK Ser/Thr protein kinase family. NIMA subfamily. It depends on Mg(2+) as a cofactor.

The catalysed reaction is L-seryl-[protein] + ATP = O-phospho-L-seryl-[protein] + ADP + H(+). It catalyses the reaction L-threonyl-[protein] + ATP = O-phospho-L-threonyl-[protein] + ADP + H(+). This chain is Serine/threonine-protein kinase D1044.8 (nekl-4), found in Caenorhabditis elegans.